A 1120-amino-acid chain; its full sequence is ISWI chromatin-remodeling complex ATPase ISW2 (1120 aa).

The segment covering 1–16 (MTTQQEEQRSDTKNSK) has biased composition (basic and acidic residues). 2 disordered regions span residues 1 to 58 (MTTQ…VEDR) and 129 to 153 (LSKS…EDAE). Phosphoserine occurs at positions 17 and 19. Residues 47-58 (LSDKEIYTVEDR) show a composition bias toward basic and acidic residues. The region spanning 196-361 (ISLHENKLSG…WALLNFLLPD (166 aa)) is the Helicase ATP-binding domain. 209–216 (DEMGLGKT) lines the ATP pocket. The short motif at 312–315 (DEAH) is the DEAH box element. In terms of domain architecture, Helicase C-terminal spans 494–645 (ILDKLLKRLK…QLVIQQGTGK (152 aa)). Disordered stretches follow at residues 764 to 783 (GGGS…PRAP) and 828 to 853 (NEGS…KGHE). The residue at position 831 (Ser-831) is a Phosphoserine. One can recognise an SANT domain in the interval 886-938 (KAFTNWNKRDFMAFINACAKYGRDDMENIKKSIDSKTPEEVEVYAKIFWERLK). The interval 1062–1120 (PDANKKKRSRTSATREDTPLSQNESTRASTVPNLPTTMVTNQKDTNDHVDKRTKIDQEA) is disordered. Thr-1079 carries the phosphothreonine modification. The segment covering 1080-1104 (PLSQNESTRASTVPNLPTTMVTNQK) has biased composition (polar residues). Ser-1082 is subject to Phosphoserine. Residues 1105–1120 (DTNDHVDKRTKIDQEA) show a composition bias toward basic and acidic residues.

This sequence belongs to the SNF2/RAD54 helicase family. ISWI subfamily. In terms of assembly, component of the ISW2 complex, which at least consists of ISW2, ITC1, DLS1 and DPB4. May form a stable subcomplex with ITC1.

It is found in the nucleus. Catalytic component of the ISW2 complex, which acts in remodeling the chromatin by catalyzing an ATP-dependent alteration in the structure of nucleosomal DNA. The ISW2 complex is involved in coordinating transcriptional repression and in inheritance of telomeric silencing. It is involved in repression of MAT a-specific genes, INO1, and early meiotic genes during mitotic growth dependent upon transcription factor UME6 and in a parallel pathway to the RPD3-SIN3 histone deacetylase complex. The chain is ISWI chromatin-remodeling complex ATPase ISW2 (ISW2) from Saccharomyces cerevisiae (strain ATCC 204508 / S288c) (Baker's yeast).